Reading from the N-terminus, the 107-residue chain is Acetyl-CoA acetyltransferase (107 aa).

C88 serves as the catalytic Acyl-thioester intermediate.

Belongs to the thiolase-like superfamily. Thiolase family. As to quaternary structure, homotetramer.

It localises to the cytoplasm. The enzyme catalyses 2 acetyl-CoA = acetoacetyl-CoA + CoA. Its function is as follows. Catalyzes the condensation of two molecules of acetyl-CoA to produce acetoacetyl-CoA. The polypeptide is Acetyl-CoA acetyltransferase (thi) (Clostridioides difficile (Peptoclostridium difficile)).